Here is a 24-residue protein sequence, read N- to C-terminus: Humanin-like 1 (24 aa).

Belongs to the humanin family. In terms of tissue distribution, highly expressed in the kidney, heart muscle and testis.

The protein localises to the secreted. It localises to the cytoplasm. Functionally, plays a role as a neuroprotective and antiapoptotic factor. The sequence is that of Humanin-like 1 from Homo sapiens (Human).